A 356-amino-acid polypeptide reads, in one-letter code: tRNA-specific 2-thiouridylase MnmA 2 (356 aa).

Residues 8 to 15 (GMSGGVDS) and M34 each bind ATP. Residue C103 is the Nucleophile of the active site. A disulfide bridge links C103 with C199. Residue G127 coordinates ATP. Residues 149–151 (KDQ) are interaction with tRNA. C199 functions as the Cysteine persulfide intermediate in the catalytic mechanism. Residues 305–306 (RY) are interaction with tRNA.

The protein belongs to the MnmA/TRMU family.

Its subcellular location is the cytoplasm. It catalyses the reaction S-sulfanyl-L-cysteinyl-[protein] + uridine(34) in tRNA + AH2 + ATP = 2-thiouridine(34) in tRNA + L-cysteinyl-[protein] + A + AMP + diphosphate + H(+). Functionally, catalyzes the 2-thiolation of uridine at the wobble position (U34) of tRNA, leading to the formation of s(2)U34. The chain is tRNA-specific 2-thiouridylase MnmA 2 from Clostridium botulinum (strain Okra / Type B1).